A 121-amino-acid chain; its full sequence is Nitrogen fixation nifHD region GlnB-like protein 2 (121 aa).

The protein belongs to the P(II) protein family.

Functionally, could be involved in the regulation of nitrogen fixation. This chain is Nitrogen fixation nifHD region GlnB-like protein 2 (glnBB), found in Methanothermobacter marburgensis (strain ATCC BAA-927 / DSM 2133 / JCM 14651 / NBRC 100331 / OCM 82 / Marburg) (Methanobacterium thermoautotrophicum).